A 352-amino-acid polypeptide reads, in one-letter code: Anthranilate phosphoribosyltransferase (352 aa).

5-phospho-alpha-D-ribose 1-diphosphate is bound by residues glycine 91, 94-95 (GD), threonine 99, 101-104 (NIST), 119-127 (KHGNRASSS), and serine 131. Glycine 91 is an anthranilate binding site. Residue serine 103 coordinates Mg(2+). Asparagine 122 is a binding site for anthranilate. Arginine 177 contributes to the anthranilate binding site. Mg(2+) contacts are provided by aspartate 235 and glutamate 236.

The protein belongs to the anthranilate phosphoribosyltransferase family. Homodimer. Mg(2+) is required as a cofactor.

The enzyme catalyses N-(5-phospho-beta-D-ribosyl)anthranilate + diphosphate = 5-phospho-alpha-D-ribose 1-diphosphate + anthranilate. Its pathway is amino-acid biosynthesis; L-tryptophan biosynthesis; L-tryptophan from chorismate: step 2/5. Functionally, catalyzes the transfer of the phosphoribosyl group of 5-phosphorylribose-1-pyrophosphate (PRPP) to anthranilate to yield N-(5'-phosphoribosyl)-anthranilate (PRA). This Arthrobacter sp. (strain FB24) protein is Anthranilate phosphoribosyltransferase.